A 343-amino-acid chain; its full sequence is Heat-inducible transcription repressor HrcA (343 aa).

Belongs to the HrcA family.

Its function is as follows. Negative regulator of class I heat shock genes (grpE-dnaK-dnaJ and groELS operons). Prevents heat-shock induction of these operons. The protein is Heat-inducible transcription repressor HrcA of Bacillus subtilis (strain 168).